Consider the following 80-residue polypeptide: Cortexin-3 (80 aa).

A helical membrane pass occupies residues 28 to 48 (TTFVFVILLFIFLGILIVRCF).

Belongs to the cortexin family.

The protein localises to the membrane. The chain is Cortexin-3 (Ctxn3) from Mus musculus (Mouse).